We begin with the raw amino-acid sequence, 315 residues long: BTB/POZ domain-containing adapter for CUL3-mediated RhoA degradation protein 3 (315 aa).

M1 carries the N-acetylmethionine modification. A Phosphoserine modification is found at S23. In terms of domain architecture, BTB spans 32 to 100 (KYVKLNVGGA…LRDGGVPLPE (69 aa)). The PCNA-binding motif lies at 239–245 (QTKVEFP). Residues 269–294 (NALLEATGGAAGRSHHLDEDEERERE) are disordered.

The protein belongs to the BACURD family. As to quaternary structure, homotetramer; forms a two-fold symmetric tetramer in solution. Interacts with CUL3; interaction is direct and forms a 5:5 heterodecamer. Component of the BCR(BACURD3) E3 ubiquitin ligase complex, at least composed of CUL3, KCTD10/BACURD3 and RBX1. Interacts with DNA polymerase delta subunit 2/POLD2. Interacts with PCNA. Associated with the tectonic-like complex (also named B9 complex); however as Kctd10 has not been identified in all tectonic-like complexes purifications it is unclear whether it is really part of the complex.

It is found in the nucleus. Its pathway is protein modification; protein ubiquitination. Substrate-specific adapter of a BCR (BTB-CUL3-RBX1) E3 ubiquitin-protein ligase complex. The BCR(BACURD3) E3 ubiquitin ligase complex mediates the ubiquitination of target proteins, leading to their degradation by the proteasome. The polypeptide is BTB/POZ domain-containing adapter for CUL3-mediated RhoA degradation protein 3 (Kctd10) (Mus musculus (Mouse)).